The following is a 237-amino-acid chain: Sugar fermentation stimulation protein homolog (237 aa).

It belongs to the SfsA family.

The sequence is that of Sugar fermentation stimulation protein homolog from Pseudomonas putida (strain ATCC 47054 / DSM 6125 / CFBP 8728 / NCIMB 11950 / KT2440).